Consider the following 344-residue polypeptide: Lysophosphatidic acid receptor 6 (344 aa).

Residues 1-19 (MVSVNSSHCFYNDSFKYTL) lie on the Extracellular side of the membrane. N-linked (GlcNAc...) asparagine glycosylation is present at N5. The helical transmembrane segment at 20–46 (YGCMFSMVFVLGLISNCVAIYIFICVL) threads the bilayer. At 47-55 (KVRNETTTY) the chain is on the cytoplasmic side. Residues 56–79 (MINLAMSDLLFVFTLPFRIFYFTT) traverse the membrane as a helical segment. Topologically, residues 80–92 (RNWPFGDLLCKIS) are extracellular. An intrachain disulfide couples C89 to C168. The chain crosses the membrane as a helical span at residues 93–112 (VMLFYTNMYGSILFLTCISV). The Cytoplasmic portion of the chain corresponds to 113–133 (DRFLAIVYPFKSKTLRTKRNA). Residues 134-154 (KIVCTGVWLTVIGGSAPAVFV) traverse the membrane as a helical segment. Residues 155 to 181 (QSTHSQGNNASEACFENFPEATWKTYL) are Extracellular-facing. The helical transmembrane segment at 182 to 209 (SRIVIFIEIVGFFIPLILNVTCSSMVLK) threads the bilayer. The Cytoplasmic segment spans residues 210-227 (TLTKPVTLSRSKINKTKV). A helical membrane pass occupies residues 228–253 (LKMIFVHLIIFCFCFVPYNINLILYS). Over 254-272 (LVRTQTFVNCSVVAAVRTM) the chain is Extracellular. The helical transmembrane segment at 273 to 292 (YPITLCIAVSNCCFDPIVYY) threads the bilayer. C284 is lipidated: S-palmitoyl cysteine. The Cytoplasmic segment spans residues 293–344 (FTSDTIQNSIKMKNWSVRRSDFRFSEVHGAENFIQHNLQTLKSKIFDNESAA).

Belongs to the G-protein coupled receptor 1 family. As to expression, expressed ubiquitously, including in skin and hair follicle cells. Detected in both Henle's and Huxley's layers of the inner root sheath of the hair follicle and in suprabasal layers of the epidermis (at protein level). Expressed at low levels in peripheral blood leukocytes.

It is found in the cell membrane. Its function is as follows. Binds to oleoyl-L-alpha-lysophosphatidic acid (LPA). Intracellular cAMP is involved in the receptor activation. Important for the maintenance of hair growth and texture. This chain is Lysophosphatidic acid receptor 6 (LPAR6), found in Homo sapiens (Human).